The sequence spans 1235 residues: DNA polymerase catalytic subunit (1235 aa).

Disordered stretches follow at residues 640–692 and 1098–1134; these read QGRF…TAGR and AAAP…ASKP. The span at 650–661 shows a compositional bias: basic and acidic residues; sequence APKRPAAAREDE. Acidic residues predominate over residues 662 to 675; it reads ERPEEEGEDEDERE. The segment covering 676-691 has biased composition (basic and acidic residues); the sequence is EGGGEREPEGARETAG.

It belongs to the DNA polymerase type-B family. Forms a complex with the ssDNA-binding protein UL29, the DNA polymerase processivity factor, and the alkaline exonuclease. Interacts with the putative helicase-primase complex subunit UL8; this interaction may coordinate leading and lagging strand DNA synthesis at the replication fork.

It localises to the host nucleus. It carries out the reaction DNA(n) + a 2'-deoxyribonucleoside 5'-triphosphate = DNA(n+1) + diphosphate. The catalysed reaction is Endonucleolytic cleavage to 5'-phosphomonoester.. Replicates viral genomic DNA. The replication complex is composed of six viral proteins: the DNA polymerase, processivity factor, primase, primase-associated factor, helicase, and ssDNA-binding protein. Additionally, the polymerase contains an intrinsic ribonuclease H (RNase H) activity that specifically degrades RNA/DNA heteroduplexes or duplex DNA substrates in the 5' to 3' direction. Therefore, it can catalyze the excision of the RNA primers that initiate the synthesis of Okazaki fragments at a replication fork during viral DNA replication. The chain is DNA polymerase catalytic subunit from Homo sapiens (Human).